We begin with the raw amino-acid sequence, 481 residues long: Glucan endo-1,3-beta-glucosidase 8 (481 aa).

A signal peptide spans 1–33 (MSNLLALVVGFVIVIGHLGILVNGLGVNWGTMA). 2 N-linked (GlcNAc...) asparagine glycosylation sites follow: Asn99 and Asn110. Glu119 serves as the catalytic Proton donor. 2 N-linked (GlcNAc...) asparagine glycosylation sites follow: Asn126 and Asn131. The Nucleophile role is filled by Glu265. The cysteines at positions 367 and 428 are disulfide-linked. N-linked (GlcNAc...) asparagine glycans are attached at residues Asn409 and Asn440. Ser455 is lipidated: GPI-anchor amidated serine. The propeptide at 456-481 (SASSFSCSSYSLVVLIVWFLLSGMMF) is removed in mature form.

It belongs to the glycosyl hydrolase 17 family. Contains two additional disulfide bonds.

The protein resides in the secreted. It localises to the cell wall. It is found in the cell membrane. It catalyses the reaction Hydrolysis of (1-&gt;3)-beta-D-glucosidic linkages in (1-&gt;3)-beta-D-glucans.. The protein is Glucan endo-1,3-beta-glucosidase 8 of Arabidopsis thaliana (Mouse-ear cress).